We begin with the raw amino-acid sequence, 254 residues long: Probable glutathione transferase omega-2 (254 aa).

Residues 25 to 105 (GTIRIYNMRY…YLDDIYPEPR (81 aa)) enclose the GST N-terminal domain. The active-site Nucleophile is Cys35. Glutathione is bound by residues Lys62, Val75, and 89–90 (ES). Residues 110–239 (DHYEKVQQKL…SQPTETAVEF (130 aa)) enclose the GST C-terminal domain.

The protein belongs to the GST superfamily. Omega family.

It catalyses the reaction RX + glutathione = an S-substituted glutathione + a halide anion + H(+). The catalysed reaction is L-dehydroascorbate + 2 glutathione = glutathione disulfide + L-ascorbate. The enzyme catalyses methylarsonate + 2 glutathione + H(+) = methylarsonous acid + glutathione disulfide + H2O. Functionally, exhibits glutathione-dependent thiol transferase activity. Has dehydroascorbate reductase activity and may contribute to the recycling of ascorbic acid. Participates in the biotransformation of inorganic arsenic and reduces monomethylarsonic acid (MMA). The chain is Probable glutathione transferase omega-2 (gsto-2) from Caenorhabditis elegans.